An 812-amino-acid polypeptide reads, in one-letter code: Collagen-like protein 5 (812 aa).

Asparagine 13 and asparagine 83 each carry an N-linked (GlcNAc...) asparagine; by host glycan. Collagen-like domains are found at residues 69-128, 143-502, and 506-565; these read GASG…KGDD, GEKG…KGDN, and GETG…KGEA. Residues 71–568 are disordered; the sequence is SGAQGVKGDP…PGIKGEAGTN (498 aa). 4 stretches are compositionally biased toward basic and acidic residues: residues 88–112, 121–435, 444–523, and 531–561; these read TKGE…EKGD, SKGD…ETGS, SKGD…KGIK, and VKGD…DPGI. Asparagine 502 carries an N-linked (GlcNAc...) asparagine; by host glycan. N-linked (GlcNAc...) asparagine; by host glycans are attached at residues asparagine 637, asparagine 658, and asparagine 667. Residues 730-802 form a disordered region; sequence GQARTNGAST…VSASGGRGGD (73 aa). The segment covering 752-765 has biased composition (gly residues); sequence FGGGGGGASGFAKG.

In terms of processing, may be hydroxylated on lysine by the viral-encoded procollagen-lysine,2-oxoglutarate 5-dioxygenase.

Its subcellular location is the virion. In terms of biological role, may participate in the formation of a layer of cross-linked glycosylated fibrils at the viral surface thus giving it a hairy-like appearance. The sequence is that of Collagen-like protein 5 from Acanthamoeba polyphaga (Amoeba).